The chain runs to 396 residues: 3-amino-4-hydroxybenzoate 2-monooxygenase PtmB3 (396 aa).

FAD contacts are provided by residues A19, 38–39 (EQ), and R112. Y217 serves as the catalytic Proton acceptor. FAD is bound at residue D295. Residues 352 to 371 (RERGHEFHLPDGPQQRLRDR) form a disordered region.

It belongs to the 6-hydroxynicotinate 3-monooxygenase family. It depends on FAD as a cofactor.

The enzyme catalyses 3-amino-4-hydroxybenzoate + NADPH + O2 + H(+) = 3-amino-2,4-dihydroxybenzoate + NADP(+) + H2O. It functions in the pathway antibiotic biosynthesis. Functionally, part of a gene cluster involved in the biosynthesis of thioplatensimycin (thioPTM) and platensimycin (PTM), potent and selective inhibitors of bacterial and mammalian fatty acid synthases. Catalyzes the hydroxylation of 3-amino-4-hydroxybenzoate (3,4-AHBA) to 3-amino-2,4-dihydroxybenzoate (3,2,4-ADHBA). The chain is 3-amino-4-hydroxybenzoate 2-monooxygenase PtmB3 from Streptomyces platensis.